The following is a 220-amino-acid chain: Ribosomal RNA large subunit methyltransferase E (220 aa).

S-adenosyl-L-methionine-binding residues include glycine 60, tryptophan 62, aspartate 92, aspartate 108, and aspartate 133. The active-site Proton acceptor is lysine 173.

The protein belongs to the class I-like SAM-binding methyltransferase superfamily. RNA methyltransferase RlmE family.

It is found in the cytoplasm. It carries out the reaction uridine(2552) in 23S rRNA + S-adenosyl-L-methionine = 2'-O-methyluridine(2552) in 23S rRNA + S-adenosyl-L-homocysteine + H(+). In terms of biological role, specifically methylates the uridine in position 2552 of 23S rRNA at the 2'-O position of the ribose in the fully assembled 50S ribosomal subunit. This is Ribosomal RNA large subunit methyltransferase E from Paraburkholderia phymatum (strain DSM 17167 / CIP 108236 / LMG 21445 / STM815) (Burkholderia phymatum).